The primary structure comprises 435 residues: Putative pyridoxal-phosphate dependent protein F13B12.4 (435 aa).

A signal peptide spans 1 to 18 (MKLLLLALFLSISASCLA). N-linked (GlcNAc...) asparagine glycosylation is present at asparagine 79. N6-(pyridoxal phosphate)lysine is present on lysine 89. 235 to 239 (GTGGT) contacts pyridoxal 5'-phosphate. Asparagine 277 carries N-linked (GlcNAc...) asparagine glycosylation. Serine 342 is a binding site for pyridoxal 5'-phosphate.

This sequence belongs to the cysteine synthase/cystathionine beta-synthase family. Highly divergent.

In Caenorhabditis elegans, this protein is Putative pyridoxal-phosphate dependent protein F13B12.4.